The primary structure comprises 929 residues: uncharacterized protein (929 aa).

Positions 1-257 (MARKGKVNTL…SVLSSDDNDS (257 aa)) are disordered. Residues 23-34 (KQLENKILHSYE) are compositionally biased toward basic and acidic residues. Acidic residues-rich tracts occupy residues 35-50 (EESA…DNDE), 59-75 (SEDD…DEED), 107-117 (LNEEDDSDDSV), 133-144 (DENELVDLDTLL), and 188-220 (SESE…DGEN). Phosphoserine is present on residues serine 251, serine 555, and serine 557. The tract at residues 602–729 (DEMQAFEDEL…KADKKNHKLK (128 aa)) is disordered. Over residues 605–619 (QAFEDELAGVPNEDD) the composition is skewed to acidic residues. The span at 670–681 (NKPEMKEGQKKA) shows a compositional bias: basic and acidic residues. The span at 696-711 (ETNPWLQVPDQRTSSA) shows a compositional bias: polar residues. The segment covering 712–729 (KKLDKNSSKADKKNHKLK) has biased composition (basic and acidic residues). 3 positions are modified to phosphoserine: serine 758, serine 760, and serine 764. A compositionally biased stretch (basic and acidic residues) spans 805–820 (KEDWVQEDAPKEEDHS). Residues 805-843 (KEDWVQEDAPKEEDHSLPGWGSWGGVGVKQRKTKPKVKK) form a disordered region. Residues 833-843 (KQRKTKPKVKK) are compositionally biased toward basic residues.

It to yeast YML093w.

It localises to the nucleus. The protein resides in the nucleolus. This is an uncharacterized protein from Schizosaccharomyces pombe (strain 972 / ATCC 24843) (Fission yeast).